The primary structure comprises 551 residues: Tripartite motif-containing protein 5 (551 aa).

A2 bears the N-acetylalanine mark. The segment at C15–R55 adopts an RING-type zinc-finger fold. S82 carries the post-translational modification Phosphoserine. The B box-type zinc-finger motif lies at Q87 to V128. Residues C92, H95, C114, and H120 each contribute to the Zn(2+) site. Residues L127 to Q221 are a coiled coil. The interval F182 to N195 is required for interaction with GABARAP and for autophagy. Residues P276 to S551 enclose the B30.2/SPRY domain.

It belongs to the TRIM/RBCC family. Can form homodimers and homotrimers. In addition to lower-order dimerization, also exhibits a higher-order multimerization and both low- and high-order multimerizations are essential for its restriction activity. Interacts with BTBD1 and BTBD2. Interacts with PSMC4, PSMC5, PSMD7 and HSPA8/HSC70. Interacts (via B30.2/SPRY domain) with HSPA1A/B. Interacts with PSMC2, MAP3K7/TAK1, TAB2 and TAB3. Interacts with SQSTM1. Interacts with TRIM6 and TRIM34. Interacts with ULK1 (phosphorylated form), GABARAP, GABARAPL1, GABARAPL2, MAP1LC3A, MAP1LC3C and BECN1. Post-translationally, degraded in a proteasome-independent fashion in the absence of viral infection but in a proteasome-dependent fashion following exposure to restriction sensitive virus. In terms of processing, autoubiquitinated in a RING finger- and UBE2D2-dependent manner. Monoubiquitinated by TRIM21. Deubiquitinated by Yersinia YopJ. Ubiquitination may not lead to proteasomal degradation.

It localises to the cytoplasm. Its subcellular location is the nucleus. It carries out the reaction S-ubiquitinyl-[E2 ubiquitin-conjugating enzyme]-L-cysteine + [acceptor protein]-L-lysine = [E2 ubiquitin-conjugating enzyme]-L-cysteine + N(6)-ubiquitinyl-[acceptor protein]-L-lysine.. It participates in protein modification; protein ubiquitination. Its function is as follows. Capsid-specific restriction factor that prevents infection from non-host-adapted retroviruses. Blocks viral replication early in the life cycle, after viral entry but before reverse transcription. In addition to acting as a capsid-specific restriction factor, also acts as a pattern recognition receptor that activates innate immune signaling in response to the retroviral capsid lattice. Binding to the viral capsid triggers its E3 ubiquitin ligase activity, and in concert with the heterodimeric ubiquitin conjugating enzyme complex UBE2V1-UBE2N (also known as UBC13-UEV1A complex) generates 'Lys-63'-linked polyubiquitin chains, which in turn are catalysts in the autophosphorylation of the MAP3K7/TAK1 complex (includes TAK1, TAB2, and TAB3). Activation of the MAP3K7/TAK1 complex by autophosphorylation results in the induction and expression of NF-kappa-B and MAPK-responsive inflammatory genes, thereby leading to an innate immune response in the infected cell. Plays a role in regulating autophagy through activation of autophagy regulator BECN1 by causing its dissociation from its inhibitors BCL2 and TAB2. This is Tripartite motif-containing protein 5 (TRIM5) from Alouatta sara (Bolivian red howler monkey).